We begin with the raw amino-acid sequence, 751 residues long: Phosphoribosylformylglycinamidine synthase subunit PurL (751 aa).

His-54 is an active-site residue. ATP contacts are provided by Tyr-57 and Lys-106. Glu-108 is a Mg(2+) binding site. Residues 109–112 and Arg-131 each bind substrate; that span reads SHNH. The active-site Proton acceptor is His-110. Residue Asp-132 participates in Mg(2+) binding. Gln-256 contributes to the substrate binding site. Mg(2+) is bound at residue Asp-284. 328–330 contributes to the substrate binding site; sequence ESQ. 2 residues coordinate ATP: Asp-516 and Gly-553. Residue Asn-554 coordinates Mg(2+). Ser-556 contributes to the substrate binding site.

The protein belongs to the FGAMS family. As to quaternary structure, monomer. Part of the FGAM synthase complex composed of 1 PurL, 1 PurQ and 2 PurS subunits.

It is found in the cytoplasm. It catalyses the reaction N(2)-formyl-N(1)-(5-phospho-beta-D-ribosyl)glycinamide + L-glutamine + ATP + H2O = 2-formamido-N(1)-(5-O-phospho-beta-D-ribosyl)acetamidine + L-glutamate + ADP + phosphate + H(+). The protein operates within purine metabolism; IMP biosynthesis via de novo pathway; 5-amino-1-(5-phospho-D-ribosyl)imidazole from N(2)-formyl-N(1)-(5-phospho-D-ribosyl)glycinamide: step 1/2. Functionally, part of the phosphoribosylformylglycinamidine synthase complex involved in the purines biosynthetic pathway. Catalyzes the ATP-dependent conversion of formylglycinamide ribonucleotide (FGAR) and glutamine to yield formylglycinamidine ribonucleotide (FGAM) and glutamate. The FGAM synthase complex is composed of three subunits. PurQ produces an ammonia molecule by converting glutamine to glutamate. PurL transfers the ammonia molecule to FGAR to form FGAM in an ATP-dependent manner. PurS interacts with PurQ and PurL and is thought to assist in the transfer of the ammonia molecule from PurQ to PurL. The chain is Phosphoribosylformylglycinamidine synthase subunit PurL from Nocardioides sp. (strain ATCC BAA-499 / JS614).